Consider the following 85-residue polypeptide: Small ribosomal subunit protein bS18 (85 aa).

The protein belongs to the bacterial ribosomal protein bS18 family. As to quaternary structure, part of the 30S ribosomal subunit. Forms a tight heterodimer with protein bS6.

Functionally, binds as a heterodimer with protein bS6 to the central domain of the 16S rRNA, where it helps stabilize the platform of the 30S subunit. In Helicobacter pylori (strain Shi470), this protein is Small ribosomal subunit protein bS18.